The chain runs to 386 residues: MTHDVLLAGAGLANGLIALALRAARPDLRVLLLDHAAGPSDGHTWSCHDPDLSPDWLARLKPLRRANWPDQEVRFPRHARRLATGYGSLDGAALADAVVRSGAEIRWDSDIALLDAQGATLSCGTRIEAGAVLDGRGAQPSRHLTVGFQKFVGVEIETDRPHGVPRPMIMDATVTQQDGYRFIYLLPFSPTRILIEDTRYSDGGDLDDDALAAASHDYARQQGWTGAEVRRERGILPIALAHDAAGFWADHAAGPVPVGLRAGFFHPVTGYSLPYAAQVADVVAGLSGPPGTDALRGAIRDYAIDRARRDRFLRLLNRMLFRGCAPDRRYTLLQRFYRMPHGLIERFYAGRLSVADQLRIVTGKPPIPLGTAIRCLPERPLLKENA.

4–34 (DVLLAGAGLANGLIALALRAARPDLRVLLLD) contributes to the NAD(+) binding site.

This sequence belongs to the lycopene cyclase family. FAD serves as cofactor.

The catalysed reaction is a carotenoid psi-end group = a carotenoid beta-end derivative. The enzyme catalyses all-trans-lycopene = gamma-carotene. It carries out the reaction gamma-carotene = all-trans-beta-carotene. The protein operates within carotenoid biosynthesis; astaxanthin biosynthesis. Functionally, catalyzes the double cyclization reaction which converts lycopene to beta-carotene. This Paracoccus sp. (strain N81106 / MBIC 01143) (Agrobacterium aurantiacum) protein is Lycopene beta-cyclase.